The sequence spans 158 residues: Methylated-DNA--protein-cysteine methyltransferase (158 aa).

The active-site Nucleophile; methyl group acceptor is the cysteine 126.

Belongs to the MGMT family.

The protein resides in the cytoplasm. It catalyses the reaction a 6-O-methyl-2'-deoxyguanosine in DNA + L-cysteinyl-[protein] = S-methyl-L-cysteinyl-[protein] + a 2'-deoxyguanosine in DNA. The enzyme catalyses a 4-O-methyl-thymidine in DNA + L-cysteinyl-[protein] = a thymidine in DNA + S-methyl-L-cysteinyl-[protein]. In terms of biological role, involved in the cellular defense against the biological effects of O6-methylguanine (O6-MeG) and O4-methylthymine (O4-MeT) in DNA. Repairs the methylated nucleobase in DNA by stoichiometrically transferring the methyl group to a cysteine residue in the enzyme. This is a suicide reaction: the enzyme is irreversibly inactivated. The protein is Methylated-DNA--protein-cysteine methyltransferase of Methanosarcina barkeri (strain Fusaro / DSM 804).